Consider the following 279-residue polypeptide: ATP synthase gamma chain (279 aa).

The protein belongs to the ATPase gamma chain family. In terms of assembly, F-type ATPases have 2 components, CF(1) - the catalytic core - and CF(0) - the membrane proton channel. CF(1) has five subunits: alpha(3), beta(3), gamma(1), delta(1), epsilon(1). CF(0) has three main subunits: a, b and c.

Its subcellular location is the cell membrane. Its function is as follows. Produces ATP from ADP in the presence of a proton gradient across the membrane. The gamma chain is believed to be important in regulating ATPase activity and the flow of protons through the CF(0) complex. This is ATP synthase gamma chain from Mycoplasmopsis pulmonis (strain UAB CTIP) (Mycoplasma pulmonis).